Reading from the N-terminus, the 42-residue chain is Iota-conotoxin-like R11.15 (42 aa).

Cystine bridges form between Cys-5-Cys-19, Cys-12-Cys-22, Cys-18-Cys-27, and Cys-21-Cys-36.

Belongs to the conotoxin I1 superfamily. Expressed by the venom duct.

It is found in the secreted. In terms of biological role, iota-conotoxins bind to voltage-gated sodium channels (Nav) and act as agonists by shifting the voltage-dependence of activation to more hyperpolarized levels. Produces general excitatory symptoms. This Conus radiatus (Rayed cone) protein is Iota-conotoxin-like R11.15.